A 68-amino-acid chain; its full sequence is MKEKIHPKYNTATNVICACGNTFTVGSTKDNIKVELCAQCHPFYTGEKRMVDTAGRVEKFRQRYGSKT.

Zn(2+)-binding residues include Cys-17, Cys-19, Cys-37, and Cys-40.

Belongs to the bacterial ribosomal protein bL31 family. Type A subfamily. In terms of assembly, part of the 50S ribosomal subunit. Requires Zn(2+) as cofactor.

Binds the 23S rRNA. This is Large ribosomal subunit protein bL31 from Dehalococcoides mccartyi (strain CBDB1).